We begin with the raw amino-acid sequence, 89 residues long: Probable Fe(2+)-trafficking protein (89 aa).

It belongs to the Fe(2+)-trafficking protein family.

Could be a mediator in iron transactions between iron acquisition and iron-requiring processes, such as synthesis and/or repair of Fe-S clusters in biosynthetic enzymes. The polypeptide is Probable Fe(2+)-trafficking protein (Hahella chejuensis (strain KCTC 2396)).